A 361-amino-acid polypeptide reads, in one-letter code: 5-formaminoimidazole-4-carboxamide-1-(beta)-D-ribofuranosyl 5'-monophosphate synthetase (361 aa).

Residues His-27 and Ser-94 each contribute to the 5-amino-1-(5-phospho-beta-D-ribosyl)imidazole-4-carboxamide site. Residues 116–348 (RAILRWEAER…MGQRIAKEIK (233 aa)) enclose the ATP-grasp domain. ATP contacts are provided by residues 146–208 (PDEI…ANYC) and Glu-230. Asn-258 contributes to the 5-amino-1-(5-phospho-beta-D-ribosyl)imidazole-4-carboxamide binding site. The Mg(2+) site is built by Gln-297 and Glu-310.

It belongs to the phosphohexose mutase family. The cofactor is Mg(2+). Requires Mn(2+) as cofactor.

The enzyme catalyses 5-amino-1-(5-phospho-beta-D-ribosyl)imidazole-4-carboxamide + formate + ATP = 5-formamido-1-(5-phospho-D-ribosyl)imidazole-4-carboxamide + ADP + phosphate. The protein operates within purine metabolism; IMP biosynthesis via de novo pathway; 5-formamido-1-(5-phospho-D-ribosyl)imidazole-4-carboxamide from 5-amino-1-(5-phospho-D-ribosyl)imidazole-4-carboxamide (formate route): step 1/1. Catalyzes the ATP- and formate-dependent formylation of 5-aminoimidazole-4-carboxamide-1-beta-d-ribofuranosyl 5'-monophosphate (AICAR) to 5-formaminoimidazole-4-carboxamide-1-beta-d-ribofuranosyl 5'-monophosphate (FAICAR) in the absence of folates. The polypeptide is 5-formaminoimidazole-4-carboxamide-1-(beta)-D-ribofuranosyl 5'-monophosphate synthetase (Methanococcus maripaludis (strain DSM 14266 / JCM 13030 / NBRC 101832 / S2 / LL)).